Here is a 396-residue protein sequence, read N- to C-terminus: NADH-quinone oxidoreductase subunit D (396 aa).

It belongs to the complex I 49 kDa subunit family. NDH-1 is composed of 14 different subunits. Subunits NuoB, C, D, E, F, and G constitute the peripheral sector of the complex.

The protein resides in the cell inner membrane. It carries out the reaction a quinone + NADH + 5 H(+)(in) = a quinol + NAD(+) + 4 H(+)(out). NDH-1 shuttles electrons from NADH, via FMN and iron-sulfur (Fe-S) centers, to quinones in the respiratory chain. The immediate electron acceptor for the enzyme in this species is believed to be ubiquinone. Couples the redox reaction to proton translocation (for every two electrons transferred, four hydrogen ions are translocated across the cytoplasmic membrane), and thus conserves the redox energy in a proton gradient. This is NADH-quinone oxidoreductase subunit D from Methylorubrum populi (strain ATCC BAA-705 / NCIMB 13946 / BJ001) (Methylobacterium populi).